The primary structure comprises 106 residues: Protein Rev (106 aa).

The homomultimerization stretch occupies residues 8–16 (VIKFLYQSN). Positions 13–36 (YQSNPPPRPEGTRQARRNRRRRWR) are disordered. The Nuclear localization signal and RNA-binding (RRE) signature appears at 24–40 (TRQARRNRRRRWRARQR). The span at 26–36 (QARRNRRRRWR) shows a compositional bias: basic residues. Positions 63–74 (LQLPPLERLTLD) match the Nuclear export signal and binding to XPO1 motif. Phosphoserine; by host is present on residues Ser-82 and Ser-89.

This sequence belongs to the HIV-1 REV protein family. In terms of assembly, homomultimer; when bound to the RRE. Multimeric assembly is essential for activity and may involve XPO1. Binds to human KPNB1, XPO1, TNPO1, RANBP5 and IPO7. Interacts with the viral Integrase. Interacts with human KHDRBS1. Interacts with human NAP1; this interaction decreases Rev multimerization and stimulates its activity. Interacts with human DEAD-box helicases DDX3 and DDX24; these interactions may serve for viral RNA export to the cytoplasm and packaging, respectively. Interacts with human PSIP1; this interaction may inhibit HIV-1 DNA integration by promoting dissociation of the Integrase-LEDGF/p75 complex. Asymmetrically arginine dimethylated at one site by host PRMT6. Methylation impairs the RNA-binding activity and export of viral RNA from the nucleus to the cytoplasm. In terms of processing, phosphorylated by protein kinase CK2. Presence of, and maybe binding to the N-terminus of the regulatory beta subunit of CK2 is necessary for CK2-mediated Rev's phosphorylation.

It is found in the host nucleus. The protein resides in the host nucleolus. Its subcellular location is the host cytoplasm. Escorts unspliced or incompletely spliced viral pre-mRNAs (late transcripts) out of the nucleus of infected cells. These pre-mRNAs carry a recognition sequence called Rev responsive element (RRE) located in the env gene, that is not present in fully spliced viral mRNAs (early transcripts). This function is essential since most viral proteins are translated from unspliced or partially spliced pre-mRNAs which cannot exit the nucleus by the pathway used by fully processed cellular mRNAs. Rev itself is translated from a fully spliced mRNA that readily exits the nucleus. Rev's nuclear localization signal (NLS) binds directly to KPNB1/Importin beta-1 without previous binding to KPNA1/Importin alpha-1. KPNB1 binds to the GDP bound form of RAN (Ran-GDP) and targets Rev to the nucleus. In the nucleus, the conversion from Ran-GDP to Ran-GTP dissociates Rev from KPNB1 and allows Rev's binding to the RRE in viral pre-mRNAs. Rev multimerization on the RRE via cooperative assembly exposes its nuclear export signal (NES) to the surface. Rev can then form a complex with XPO1/CRM1 and Ran-GTP, leading to nuclear export of the complex. Conversion from Ran-GTP to Ran-GDP mediates dissociation of the Rev/RRE/XPO1/RAN complex, so that Rev can return to the nucleus for a subsequent round of export. Beside KPNB1, also seems to interact with TNPO1/Transportin-1, RANBP5/IPO5 and IPO7/RANBP7 for nuclear import. The nucleoporin-like HRB/RIP is an essential cofactor that probably indirectly interacts with Rev to release HIV RNAs from the perinuclear region to the cytoplasm. The chain is Protein Rev from Homo sapiens (Human).